Consider the following 60-residue polypeptide: Acidic phospholipase A2 (60 aa).

Y27, G29, and G31 together coordinate Ca(2+). C28 and C44 form a disulfide bridge. Residue H47 is part of the active site. D48 is a binding site for Ca(2+).

It belongs to the phospholipase A2 family. Group II subfamily. D49 sub-subfamily. As to quaternary structure, monomer. Ca(2+) is required as a cofactor. As to expression, expressed by the venom gland.

Its subcellular location is the secreted. The enzyme catalyses a 1,2-diacyl-sn-glycero-3-phosphocholine + H2O = a 1-acyl-sn-glycero-3-phosphocholine + a fatty acid + H(+). In terms of biological role, snake venom phospholipase A2 (PLA2) that exhibits an indirect hemolytic activity, a low myotoxicity, and induces edema. In addition, this enzyme has been shown to induce the release of some pro- and anti-inflammatory cytokines from human PBMC (IL12B, TNF-alpha, IL1B and IL6 but not variation has been observed for IL-8 and IL-10). PLA2 catalyzes the calcium-dependent hydrolysis of the 2-acyl groups in 3-sn-phosphoglycerides. This chain is Acidic phospholipase A2, found in Bothrops leucurus (Whitetail lancehead).